The primary structure comprises 344 residues: Meiotic recombination protein DMC1 homolog A (344 aa).

133 to 140 (GEFRSGKT) is a binding site for ATP. R235 provides a ligand contact to dsDNA. Residues R235, F238, R241, R247, and R315 each coordinate ssDNA. Positions 241 and 247 each coordinate dsDNA.

The protein belongs to the RecA family. DMC1 subfamily. In terms of tissue distribution, expressed in pollen mother cells and root tips.

It localises to the nucleus. In terms of biological role, recombinase that may participate in meiotic recombination, specifically in homologous strand assimilation, which is required for the resolution of meiotic double-strand breaks. Exhibits DNA-dependent ATPase activity when bound to single-stranded DNA (ssDNA). Mediates renaturation of homologous complementary strands as well as assimilation of single strands into homologous supercoiled duplexes leading to D-loop formation. Binds circular single-stranded DNA (ssDNA) and circular double-stranded DNA (dsDNA) in vitro. Catalyzes DNA homologous renaturation and DNA strand exchange. The rates of these activities are dependent on the state of ATP hydrolysis. Forms helical filaments along ssDNA and dsDNA, and promotes strand exchange between ssDNA and dsDNA with long DNA substrates of several thousand base pairs. The presence of the replication protein A is not required for this activity. Seems to be required for homologous pairing and subsequent chromosome segregation during male meiosis. May be not directly required for homologous pairing during male meiosis. Required for synaptonemal complex assembly and crossover formation. Functions redundantly with DMC1B. This Oryza sativa subsp. indica (Rice) protein is Meiotic recombination protein DMC1 homolog A.